The sequence spans 69 residues: Sec-independent protein translocase protein TatA (69 aa).

The chain crosses the membrane as a helical span at residues M1 to F21. The disordered stretch occupies residues S43–A69.

The protein belongs to the TatA/E family. As to quaternary structure, the Tat system comprises two distinct complexes: a TatABC complex, containing multiple copies of TatA, TatB and TatC subunits, and a separate TatA complex, containing only TatA subunits. Substrates initially bind to the TatABC complex, which probably triggers association of the separate TatA complex to form the active translocon.

Its subcellular location is the cell inner membrane. Its function is as follows. Part of the twin-arginine translocation (Tat) system that transports large folded proteins containing a characteristic twin-arginine motif in their signal peptide across membranes. TatA could form the protein-conducting channel of the Tat system. This is Sec-independent protein translocase protein TatA from Anaeromyxobacter sp. (strain Fw109-5).